The primary structure comprises 243 residues: Pyridoxine 5'-phosphate synthase (243 aa).

3-amino-2-oxopropyl phosphate is bound at residue Asn9. Residue 11–12 coordinates 1-deoxy-D-xylulose 5-phosphate; sequence DH. A 3-amino-2-oxopropyl phosphate-binding site is contributed by Arg20. Catalysis depends on His45, which acts as the Proton acceptor. Positions 47 and 52 each coordinate 1-deoxy-D-xylulose 5-phosphate. Glu72 (proton acceptor) is an active-site residue. Residue Thr102 participates in 1-deoxy-D-xylulose 5-phosphate binding. His193 acts as the Proton donor in catalysis. 3-amino-2-oxopropyl phosphate contacts are provided by residues Gly194 and 215 to 216; that span reads GH.

It belongs to the PNP synthase family. Homooctamer; tetramer of dimers.

The protein resides in the cytoplasm. It carries out the reaction 3-amino-2-oxopropyl phosphate + 1-deoxy-D-xylulose 5-phosphate = pyridoxine 5'-phosphate + phosphate + 2 H2O + H(+). It participates in cofactor biosynthesis; pyridoxine 5'-phosphate biosynthesis; pyridoxine 5'-phosphate from D-erythrose 4-phosphate: step 5/5. In terms of biological role, catalyzes the complicated ring closure reaction between the two acyclic compounds 1-deoxy-D-xylulose-5-phosphate (DXP) and 3-amino-2-oxopropyl phosphate (1-amino-acetone-3-phosphate or AAP) to form pyridoxine 5'-phosphate (PNP) and inorganic phosphate. The protein is Pyridoxine 5'-phosphate synthase of Vibrio parahaemolyticus serotype O3:K6 (strain RIMD 2210633).